A 246-amino-acid chain; its full sequence is UDP-N-acetyl-D-mannosaminuronic acid transferase (246 aa).

It belongs to the glycosyltransferase 26 family.

The enzyme catalyses UDP-N-acetyl-alpha-D-mannosaminouronate + N-acetyl-alpha-D-glucosaminyl-di-trans,octa-cis-undecaprenyl diphosphate = beta-D-ManNAcA-(1-&gt;4)-alpha-D-GlcNAc-di-trans,octa-cis-undecaprenyl diphosphate + UDP + H(+). It participates in bacterial outer membrane biogenesis; enterobacterial common antigen biosynthesis. Functionally, catalyzes the synthesis of Und-PP-GlcNAc-ManNAcA (Lipid II), the second lipid-linked intermediate involved in enterobacterial common antigen (ECA) synthesis. The chain is UDP-N-acetyl-D-mannosaminuronic acid transferase from Serratia proteamaculans (strain 568).